We begin with the raw amino-acid sequence, 879 residues long: Phosphoenolpyruvate carboxylase (879 aa).

Catalysis depends on residues histidine 138 and lysine 545.

Belongs to the PEPCase type 1 family. It depends on Mg(2+) as a cofactor.

It carries out the reaction oxaloacetate + phosphate = phosphoenolpyruvate + hydrogencarbonate. Its function is as follows. Forms oxaloacetate, a four-carbon dicarboxylic acid source for the tricarboxylic acid cycle. The polypeptide is Phosphoenolpyruvate carboxylase (ppc) (Haemophilus influenzae (strain ATCC 51907 / DSM 11121 / KW20 / Rd)).